We begin with the raw amino-acid sequence, 463 residues long: Cysteine--tRNA ligase (463 aa).

Cys-33 serves as a coordination point for Zn(2+). The 'HIGH' region motif lies at 35–45 (PTVYDFAHIGN). Zn(2+)-binding residues include Cys-221, His-246, and Glu-250. The 'KMSKS' region signature appears at 279–283 (KMSKS). Lys-282 lines the ATP pocket.

This sequence belongs to the class-I aminoacyl-tRNA synthetase family. As to quaternary structure, monomer. It depends on Zn(2+) as a cofactor.

The protein localises to the cytoplasm. The catalysed reaction is tRNA(Cys) + L-cysteine + ATP = L-cysteinyl-tRNA(Cys) + AMP + diphosphate. This chain is Cysteine--tRNA ligase, found in Rhizobium rhizogenes (strain K84 / ATCC BAA-868) (Agrobacterium radiobacter).